Here is a 391-residue protein sequence, read N- to C-terminus: Phosphoglycerate kinase (391 aa).

Substrate contacts are provided by residues 21–23 (DLN), Arg36, 59–62 (HLGR), Arg113, and Arg146. Residues Lys197, Glu319, and 345–348 (GGDT) each bind ATP.

The protein belongs to the phosphoglycerate kinase family. In terms of assembly, monomer.

The protein localises to the cytoplasm. The enzyme catalyses (2R)-3-phosphoglycerate + ATP = (2R)-3-phospho-glyceroyl phosphate + ADP. The protein operates within carbohydrate degradation; glycolysis; pyruvate from D-glyceraldehyde 3-phosphate: step 2/5. The chain is Phosphoglycerate kinase from Shewanella sp. (strain ANA-3).